The sequence spans 817 residues: Probable beta-glucosidase G (817 aa).

An N-terminal signal peptide occupies residues 1–20 (MASIAHLIFSGLLAATVANS). Residues Asn-40, Asn-58, Asn-229, and Asn-276 are each glycosylated (N-linked (GlcNAc...) asparagine). Asp-304 is an active-site residue. Asn-343, Asn-350, Asn-402, Asn-507, Asn-563, Asn-584, Asn-623, Asn-662, Asn-679, and Asn-715 each carry an N-linked (GlcNAc...) asparagine glycan.

It belongs to the glycosyl hydrolase 3 family.

The protein resides in the secreted. The enzyme catalyses Hydrolysis of terminal, non-reducing beta-D-glucosyl residues with release of beta-D-glucose.. It participates in glycan metabolism; cellulose degradation. Functionally, beta-glucosidases are one of a number of cellulolytic enzymes involved in the degradation of cellulosic biomass. Catalyzes the last step releasing glucose from the inhibitory cellobiose. The sequence is that of Probable beta-glucosidase G (bglG) from Neosartorya fischeri (strain ATCC 1020 / DSM 3700 / CBS 544.65 / FGSC A1164 / JCM 1740 / NRRL 181 / WB 181) (Aspergillus fischerianus).